We begin with the raw amino-acid sequence, 75 residues long: Peptide Ctri9610 (75 aa).

An N-terminal signal peptide occupies residues 1 to 22; it reads MNSKYLFVFLILNVIFIDLCQG. Lys-41 carries the post-translational modification Lysine amide. The propeptide occupies 42 to 75; that stretch reads GTRRRELGSQYDYLQDFRKRELDLDDLLSKFPDY.

It belongs to the non-disulfide-bridged peptide (NDBP) superfamily. Short antimicrobial peptide (group 4) family. Expressed by the venom gland.

The protein localises to the secreted. The polypeptide is Peptide Ctri9610 (Chaerilus tricostatus (Scorpion)).